The sequence spans 421 residues: Phosphoribosylamine--glycine ligase (421 aa).

An ATP-grasp domain is found at 108–314; sequence KEIMVKYNVP…FAQNIDDIMM (207 aa). 134–195 is an ATP binding site; the sequence is IEEQGAPIVV…EEFLDGEEFS (62 aa). Mg(2+) contacts are provided by E284 and N286.

It belongs to the GARS family. Mg(2+) serves as cofactor. It depends on Mn(2+) as a cofactor.

The enzyme catalyses 5-phospho-beta-D-ribosylamine + glycine + ATP = N(1)-(5-phospho-beta-D-ribosyl)glycinamide + ADP + phosphate + H(+). Its pathway is purine metabolism; IMP biosynthesis via de novo pathway; N(1)-(5-phospho-D-ribosyl)glycinamide from 5-phospho-alpha-D-ribose 1-diphosphate: step 2/2. The sequence is that of Phosphoribosylamine--glycine ligase from Streptococcus pyogenes serotype M1.